The primary structure comprises 1153 residues: Probable RNA-dependent RNA polymerase 3 (1153 aa).

It belongs to the RdRP family. Expressed in shoot apical meristem (SAM) and panicles.

It catalyses the reaction RNA(n) + a ribonucleoside 5'-triphosphate = RNA(n+1) + diphosphate. Its function is as follows. Probably involved in the RNA silencing pathway and required for the generation of small interfering RNAs (siRNAs). This is Probable RNA-dependent RNA polymerase 3 (RDR3) from Oryza sativa subsp. japonica (Rice).